The chain runs to 1092 residues: Fibrinogen-binding protein (1092 aa).

An N-terminal signal peptide occupies residues 1 to 51 (MINKKNNLLTKKKPIANKSNKYAIRKFTVGTASIVIGATLLFGLGHNEAKA). The span at 50-63 (KAEENSVQDVKDSN) shows a compositional bias: basic and acidic residues. The tract at residues 50–236 (KAEENSVQDV…GYTNIDEKIS (187 aa)) is disordered. Residues 52-599 (EENSVQDVKD…GQGQGDLPPE (548 aa)) form a ligand binding A region region. Acidic residues predominate over residues 64–76 (TDDELSDSNDQSS). Positions 84-98 (INNNQSINTDDNNQI) are enriched in low complexity. Positions 99–119 (IKKEETNNYDGIEKRSEDRTE) are enriched in basic and acidic residues. A compositionally biased stretch (polar residues) spans 120–140 (STTNVDENEATFLQKTPQDNT). Basic and acidic residues predominate over residues 141-151 (HLTEEEVKESS). Polar residues predominate over residues 160 to 170 (IDTAQQPSHTT). Basic and acidic residues predominate over residues 195 to 220 (KIKESNTESGKEENTIEQPNKVKEDS). 4 residues coordinate Ca(2+): E294, S299, V302, and E309. Residues 579 to 590 (YDNTIAFSTSSG) are interaction with human fibrinogen. CNA-B domains lie at 600-713 (KTYK…YQTP) and 714-824 (KYSL…YDDE). A disordered region spans residues 780-1068 (KPSGMTQTTT…NEDYGSKGTL (289 aa)). A compositionally biased stretch (acidic residues) spans 791-801 (SGDDDEQDADG). A compositionally biased stretch (basic and acidic residues) spans 802-814 (EEVHVTITDHDDF). Positions 820–1039 (YYDDESDSDS…DSDSDSDNDS (220 aa)) are enriched in acidic residues. The LPXTG sorting signal motif lies at 1053-1057 (LPDTG). Pentaglycyl murein peptidoglycan amidated threonine is present on T1056. A propeptide spans 1057 to 1092 (GANEDYGSKGTLLGTLFAGLGALLLGKRRKNRKNKN) (removed by sortase).

Belongs to the serine-aspartate repeat-containing protein (SDr) family.

It is found in the secreted. The protein localises to the cell wall. Promotes bacterial attachment to both soluble and immobilized forms of fibrinogen in a dose-dependent manner. This binding occurs through the beta-chain of human fibrinogen. Could contribute to the initiation of foreign-body infection by allowing bacteria to adhere to biomaterial surfaces that have become coated with host proteins after implantation. Is important in the pathogenesis of central venous catheter (CVC)-associated infection model. The chain is Fibrinogen-binding protein (fbe) from Staphylococcus epidermidis.